Here is a 1024-residue protein sequence, read N- to C-terminus: Beta-galactosidase (1024 aa).

Positions 103 and 202 each coordinate substrate. Asp-202 serves as a coordination point for Na(+). Mg(2+)-binding residues include Glu-417, His-419, and Glu-462. Substrate-binding positions include Glu-462 and 538–541 (EYAH). Glu-462 acts as the Proton donor in catalysis. Residue Glu-538 is the Nucleophile of the active site. Asn-598 is a Mg(2+) binding site. Na(+) is bound by residues Phe-602 and Asn-605. Substrate contacts are provided by Asn-605 and Trp-1000.

It belongs to the glycosyl hydrolase 2 family. In terms of assembly, homotetramer. Requires Mg(2+) as cofactor. Na(+) serves as cofactor.

It catalyses the reaction Hydrolysis of terminal non-reducing beta-D-galactose residues in beta-D-galactosides.. The chain is Beta-galactosidase from Escherichia coli O139:H28 (strain E24377A / ETEC).